A 38-amino-acid polypeptide reads, in one-letter code: Potassium channel toxin alpha-KTx 3.17 (38 aa).

Intrachain disulfides connect cysteine 8–cysteine 28, cysteine 14–cysteine 33, and cysteine 18–cysteine 35.

It belongs to the short scorpion toxin superfamily. Potassium channel inhibitor family. Alpha-KTx 03 subfamily. As to expression, expressed by the venom gland.

The protein resides in the secreted. Completely inhibits the (125)I-kaliotoxin binding on rat brain synaptosomes with high-affinity (IC(50)=0.1 nM). Is a potent Kv1.3/KCNA3 ligand. This Buthus paris (Scorpion) protein is Potassium channel toxin alpha-KTx 3.17.